The chain runs to 246 residues: Uridylate kinase (246 aa).

Residue 18–21 (KVSG) coordinates ATP. Residue Gly-60 participates in UMP binding. Gly-61 and Arg-65 together coordinate ATP. UMP-binding positions include Asp-80 and 141-148 (TGNPFFTT). Residues Thr-168, Gln-169, Tyr-174, and Asp-177 each contribute to the ATP site.

Belongs to the UMP kinase family. As to quaternary structure, homohexamer.

Its subcellular location is the cytoplasm. The catalysed reaction is UMP + ATP = UDP + ADP. It participates in pyrimidine metabolism; CTP biosynthesis via de novo pathway; UDP from UMP (UMPK route): step 1/1. With respect to regulation, inhibited by UTP. In terms of biological role, catalyzes the reversible phosphorylation of UMP to UDP. The chain is Uridylate kinase from Gluconobacter oxydans (strain 621H) (Gluconobacter suboxydans).